The chain runs to 303 residues: Bifunctional protein FolD (303 aa).

NADP(+) is bound by residues 175 to 177 (GVS) and Ile243.

The protein belongs to the tetrahydrofolate dehydrogenase/cyclohydrolase family. As to quaternary structure, homodimer.

It carries out the reaction (6R)-5,10-methylene-5,6,7,8-tetrahydrofolate + NADP(+) = (6R)-5,10-methenyltetrahydrofolate + NADPH. It catalyses the reaction (6R)-5,10-methenyltetrahydrofolate + H2O = (6R)-10-formyltetrahydrofolate + H(+). It participates in one-carbon metabolism; tetrahydrofolate interconversion. Its function is as follows. Catalyzes the oxidation of 5,10-methylenetetrahydrofolate to 5,10-methenyltetrahydrofolate and then the hydrolysis of 5,10-methenyltetrahydrofolate to 10-formyltetrahydrofolate. The chain is Bifunctional protein FolD from Xanthomonas euvesicatoria pv. vesicatoria (strain 85-10) (Xanthomonas campestris pv. vesicatoria).